We begin with the raw amino-acid sequence, 826 residues long: MHLHLLAAEKTPPSPSPNPTPTPSASPSGHTGAAGESQLDLASQTESQLQLGLPLASGYGLGLGLGLGLGLGLGQELVADHSTTVAPVSVAGPGRLGRSINGSGGSHHHHHLHHHYSPYHHAHPYHPPHPHAPHHHHHHHPPYPYPPAGPHPPAMVTSSSTSPTGNGWSSSTGDFKGITAVATATGGGVGGATQGATASTGATAAEVLAVSSSASVGSSSPTGGASNGTAHSGHSGHTGGHSSSTASNNNNNGASNSNSNNNNAVHQDLLWMERLVQKRQQEHPGELVRTSNPYFLCSALPAHWRSNKTLPMAFKVVALAEVGDGTYVTIRAGNDENCCAELRNFTTQMKNDVAKFNDLRFVGRSGRGKSFTLTITVATSPPQVATYAKAIKVTVDGPREPRSKTSPTGGPHYRALGLGQRPYIDGFPSTKALHELESLRRSAKVAAVTTAAAAAATAASAANAVAAAAAAVAVTPTGGGGGVAAGGVAGGAGAGLVQQLSSNYSSPNSTINSDCQVYKPNAPHIQAAEMMGAGEWTNGSSSSAAAYYHSHAHHPHAHHAHAHLQHQMALPPPPPPPAAAPVSVGVGGNGATMGMGMGVGVGMGMNHYGGGYDSANSLEAGQYAAHLPAVLPEMHGHGFATDPYQTAGYGGGNTGGGSASKSELDYGGSYNQAWSNGYQNYQYGSCLATAQYGPQAAPPPQPPPPPPVVLCPQLYSTVNQNQIHLHLHSSEKLEQYLGTATSADHLTIGSLTGSSRSSIEIGQDQYHQQVHHAQQQQQQQQQQQQVHHPQQQQVESAGEVGGSGAGGVESAREEDVGDLSQVWRPY.

3 disordered regions span residues 1-45, 87-171, and 214-263; these read MHLH…ASQT, PVSV…WSSS, and ASVG…NNNN. Positions 12–24 are enriched in pro residues; sequence PPSPSPNPTPTPS. Over residues 106–141 the composition is skewed to basic residues; sequence SHHHHHLHHHYSPYHHAHPYHPPHPHAPHHHHHHHP. The segment covering 142–153 has biased composition (pro residues); it reads PYPYPPAGPHPP. Over residues 156–171 the composition is skewed to polar residues; that stretch reads VTSSSTSPTGNGWSSS. The Runt domain maps to 275–403; the sequence is LVQKRQQEHP…TVDGPREPRS (129 aa). Over residues 774–798 the composition is skewed to low complexity; it reads QQQQQQQQQQQQVHHPQQQQVESAG. A disordered region spans residues 774 to 826; it reads QQQQQQQQQQQQVHHPQQQQVESAGEVGGSGAGGVESAREEDVGDLSQVWRPY.

As to expression, expressed in the pupal eye during programmed cell death.

Its subcellular location is the nucleus. Its function is as follows. Involved in prepatterning photoreceptor precursors in the developing eye; in the larval eye disk it defines a subset of cells as an equipotential group that is competent to respond to the sevenless developmental signal and another subset that confer proper photoreceptor identity by positively regulating the homeo box gene Bar. Involved in the aop/pnt dynamic in a Ras-dependent manner to regulate pros expression. Promotes apoptosis in the pupal eye by directly activating aos and klu. Also modulates hid- and rpr-mediated cell death. Regulates amos function in olfactory sensilla development. The polypeptide is Protein lozenge (lz) (Drosophila melanogaster (Fruit fly)).